We begin with the raw amino-acid sequence, 74 residues long: Serine protease inhibitor Kazal-type 7 (74 aa).

The first 17 residues, 1 to 17 (MKLLGGLLLLFTATCLC), serve as a signal peptide directing secretion. The region spanning 18–74 (NVDCDIYKKYPVVAIPCPIENIPVCGSDYITYGNKCKLCTEILRSNGKIQFLHEGHC) is the Kazal-like domain. Disulfide bonds link C21/C56, C34/C53, and C42/C74.

The protein resides in the secreted. Functionally, probable serine protease inhibitor. The protein is Serine protease inhibitor Kazal-type 7 (Spink7) of Rattus norvegicus (Rat).